We begin with the raw amino-acid sequence, 314 residues long: Ferrochelatase (314 aa).

Positions 184 and 259 each coordinate Fe cation.

The protein belongs to the ferrochelatase family.

It is found in the cytoplasm. The enzyme catalyses heme b + 2 H(+) = protoporphyrin IX + Fe(2+). It functions in the pathway porphyrin-containing compound metabolism; protoheme biosynthesis; protoheme from protoporphyrin-IX: step 1/1. In terms of biological role, catalyzes the ferrous insertion into protoporphyrin IX. The polypeptide is Ferrochelatase (Chlamydia trachomatis serovar D (strain ATCC VR-885 / DSM 19411 / UW-3/Cx)).